We begin with the raw amino-acid sequence, 115 residues long: NADH-ubiquinone oxidoreductase chain 3 (115 aa).

3 helical membrane passes run 4-24, 55-75, and 84-104; these read IMAM…AFWL, FFLV…LLPL, and MFLT…GLAY.

It belongs to the complex I subunit 3 family. As to quaternary structure, core subunit of respiratory chain NADH dehydrogenase (Complex I) which is composed of 45 different subunits. Interacts with TMEM186. Interacts with TMEM242.

The protein localises to the mitochondrion inner membrane. The catalysed reaction is a ubiquinone + NADH + 5 H(+)(in) = a ubiquinol + NAD(+) + 4 H(+)(out). In terms of biological role, core subunit of the mitochondrial membrane respiratory chain NADH dehydrogenase (Complex I) which catalyzes electron transfer from NADH through the respiratory chain, using ubiquinone as an electron acceptor. Essential for the catalytic activity of complex I. The protein is NADH-ubiquinone oxidoreductase chain 3 of Phyllotis darwinii (Darwin's leaf-eared mouse).